The chain runs to 671 residues: DNA ligase (671 aa).

Residues D32–D36, S81–L82, and E113 each bind NAD(+). The active-site N6-AMP-lysine intermediate is the K115. The NAD(+) site is built by R136, E173, K290, and K314. Positions 408, 411, 426, and 432 each coordinate Zn(2+). The region spanning E593 to S671 is the BRCT domain.

It belongs to the NAD-dependent DNA ligase family. LigA subfamily. The cofactor is Mg(2+). Mn(2+) serves as cofactor.

The enzyme catalyses NAD(+) + (deoxyribonucleotide)n-3'-hydroxyl + 5'-phospho-(deoxyribonucleotide)m = (deoxyribonucleotide)n+m + AMP + beta-nicotinamide D-nucleotide.. In terms of biological role, DNA ligase that catalyzes the formation of phosphodiester linkages between 5'-phosphoryl and 3'-hydroxyl groups in double-stranded DNA using NAD as a coenzyme and as the energy source for the reaction. It is essential for DNA replication and repair of damaged DNA. The sequence is that of DNA ligase from Shigella flexneri serotype 5b (strain 8401).